The primary structure comprises 994 residues: MPPKASNSTEVWINPKLSVKFPFEPYECQRIFMKNVVDVLDRKLDAALESPTGTGKTLSLLCSTLAWVQRQKETKPLDFATWQTSGAGGAEKTDEKLKSAYVPTIFYASRTHSQLEQVVHELNRTEYKWVKTTILGSREHFCINQKVKKIKESNRQAHVCRGLVSKRACHYYNKFDACTTDKMTEFLDKGEAMDIEDFVKLGTQNSLCPYFMSRQRSETAELILLPYNYIIDPKMRRRYKLDLKNSIVIFDEAHNLESICESNASAELTSTSIALCIEELKKVLALLVDEEETARSEADAETGAFGSAKIDLTKKLIENLRTEDLMTVLEKIFSLEEEMDKLFGSSQLKSVPPLSGKASDGEILLETLAKAGFDANSVERLVDVLRDAISYLLSKNEEVALTEKGDGMEKVADFLLSIYSTHAQDVAAAVGEETVKLVDRVDPKTVARNCKLYIQKDKDNEKLTIKYFCFQASISMRMLKMRGVRNVLLASGTLSPIQAFTYNMGLNFGAILENEHALKQVPVLTSIVTRGKRGGLAGSFQNRKNLDYVTGVAEALLRVMEVIPQGILIFFSSYSQMDELVATWKTTKWSSNSNESFWEKMEKTKRVVVEPRAKEELAAIRLRYTQGVSEQHGAALLAVCRGKVSEGIDFCDAESRAVIIIGIPYPPIHDERVVLKKMYLDDLMGRKDTKSERQSSQDWYQMEAFRAVNQAIGRVLRHKDDFGTVVLMDTRYASAKPEMFPKWLRNTISRSDTDGCALKTSRFFKERGHLIENSKTEYIKKQAKQCKSFRQVKQTAASDSKDDIIEITLEDMFSPANMKLEKKEITKLRPPQLIPSTSSVFSLPTNEDELKIKKWEQENDIQCLSSIPLESNKRKFKIETPGPSTSTLTQKSEPPKKKKILLLTRNTLPDEYQKAIEIPTSELLKDMSDDNKKQFATTLRSYKAESIRWDEVFQRFRPIFVPHKADLFIACSNVLRSEDKMKYLKKALESKIHT.

The 286-residue stretch at 15–300 (PKLSVKFPFE…EETARSEADA (286 aa)) folds into the Helicase ATP-binding domain. Residue 50–57 (SPTGTGKT) coordinates ATP. The [4Fe-4S] cluster site is built by Cys142, Cys160, Cys169, and Cys208. The DEAH box signature appears at 251-254 (DEAH). The disordered stretch occupies residues 876 to 895 (FKIETPGPSTSTLTQKSEPP). Residues 882-892 (GPSTSTLTQKS) are compositionally biased toward polar residues.

This sequence belongs to the helicase family. RAD3/XPD subfamily.

It is found in the nucleus. It catalyses the reaction ATP + H2O = ADP + phosphate + H(+). Functionally, a probable ATP-dependent DNA helicase implicated in DNA repair and the maintenance of genomic stability. Acts as an anti-recombinase to counteract toxic recombination and limit crossover during meiosis. Regulates meiotic recombination and crossover homeostasis by physically dissociating strand invasion events and thereby promotes noncrossover repair by meiotic synthesis dependent strand annealing (SDSA) as well as disassembly of D loop recombination intermediates. In Caenorhabditis elegans, this protein is Regulator of telomere elongation helicase 1 homolog.